The chain runs to 426 residues: Histidine--tRNA ligase (426 aa).

It belongs to the class-II aminoacyl-tRNA synthetase family. In terms of assembly, homodimer.

It is found in the cytoplasm. It catalyses the reaction tRNA(His) + L-histidine + ATP = L-histidyl-tRNA(His) + AMP + diphosphate + H(+). This is Histidine--tRNA ligase from Legionella pneumophila (strain Paris).